The sequence spans 520 residues: Ribonuclease Y (520 aa).

A helical transmembrane segment spans residues 3–23 (IELAIIFIVLAAGAGFLIGNL). Residues 210-273 (TVSVVALPSD…EVAKIALEKL (64 aa)) form the KH domain. Positions 336–429 (VYQHSLEVAF…VQAADALSGA (94 aa)) constitute an HD domain.

It belongs to the RNase Y family.

It localises to the cell membrane. In terms of biological role, endoribonuclease that initiates mRNA decay. This Geobacter sulfurreducens (strain ATCC 51573 / DSM 12127 / PCA) protein is Ribonuclease Y.